The following is a 509-amino-acid chain: Dye-decolorizing peroxidase AauDyP1 (509 aa).

The N-terminal stretch at 1-22 is a signal peptide; sequence MRLSPVFVALLSGLLAADLGLA. Positions 23–61 are excised as a propeptide; that stretch reads RSVAPRVADSPAAVTGTRKTSLLKNVAGLPPVPSAAQVA. Asp-229 acts as the Proton acceptor in catalysis. Residue Asn-343 is glycosylated (N-linked (GlcNAc...) asparagine). His-365 contributes to the heme binding site. Residues Asn-383, Asn-410, and Asn-476 are each glycosylated (N-linked (GlcNAc...) asparagine).

It belongs to the DyP-type peroxidase family. It depends on heme b as a cofactor.

The protein resides in the secreted. It carries out the reaction Reactive Blue 5 + 2 H2O2 = 2,2'-disulfonyl azobenzene + 3-[(4-amino-6-chloro-1,3,5-triazin-2-yl)amino]benzenesulfonate + phthalate + 2 H2O + 2 H(+). The enzyme catalyses 2 a phenolic donor + H2O2 = 2 a phenolic radical donor + 2 H2O. Inhibited by imidazole. Functionally, manganese-independent peroxidase that is able to convert a large number of compounds, but its physiological substrate is not known. In addition to classic peroxidase substrates (e.g. 2,6-dimethoxyphenol), oxidizes dyes such as Reactive Blue 5 and Reactive Black 5. The sequence is that of Dye-decolorizing peroxidase AauDyP1 from Auricularia auricula-judae (Judas ear fungus).